The sequence spans 518 residues: Bifunctional methyltransferase (518 aa).

Residues 1-300 (MQYSIKQILN…SHNRVIEISP (300 aa)) are hemK. The interval 1-302 (MQYSIKQILN…NRVIEISPIN (302 aa)) is RF MTase. S-adenosyl-L-methionine-binding positions include 140–144 (GTGSG), D163, W192, N207, E347, E372, N399, and D421. Substrate is bound at residue 207–210 (NPPY). The interval 301 to 518 (INLNRSYARR…MILQHALTGH (218 aa)) is tRNA (guanine-N(7)-)-methyltransferase. Residues 305–518 (RSYARRIGKS…MILQHALTGH (214 aa)) are tRNA MTase. The active site involves D421. Substrate-binding residues include K425 and D457.

In the C-terminal section; belongs to the class I-like SAM-binding methyltransferase superfamily. TrmB family. This sequence in the N-terminal section; belongs to the protein N5-glutamine methyltransferase family. PrmC subfamily.

The catalysed reaction is L-glutaminyl-[peptide chain release factor] + S-adenosyl-L-methionine = N(5)-methyl-L-glutaminyl-[peptide chain release factor] + S-adenosyl-L-homocysteine + H(+). It catalyses the reaction guanosine(46) in tRNA + S-adenosyl-L-methionine = N(7)-methylguanosine(46) in tRNA + S-adenosyl-L-homocysteine. Methylates the class 1 translation termination release factors RF1/PrfA and RF2/PrfB on the glutamine residue of the universally conserved GGQ motif. Its function is as follows. Catalyzes the formation of N(7)-methylguanine at position 46 (m7G46) in tRNA. The protein is Bifunctional methyltransferase (prmC/trmB) of Rickettsia typhi (strain ATCC VR-144 / Wilmington).